We begin with the raw amino-acid sequence, 335 residues long: DNA-directed RNA polymerase subunit alpha (335 aa).

Positions 1-233 (MIRDEISVSI…DLFIPFLHGE (233 aa)) are alpha N-terminal domain (alpha-NTD). The segment at 264-335 (KEKIAFQLIF…KLFAIDPPRN (72 aa)) is alpha C-terminal domain (alpha-CTD).

It belongs to the RNA polymerase alpha chain family. As to quaternary structure, in plastids the minimal PEP RNA polymerase catalytic core is composed of four subunits: alpha, beta, beta', and beta''. When a (nuclear-encoded) sigma factor is associated with the core the holoenzyme is formed, which can initiate transcription.

The protein resides in the plastid. It localises to the chloroplast. It catalyses the reaction RNA(n) + a ribonucleoside 5'-triphosphate = RNA(n+1) + diphosphate. Functionally, DNA-dependent RNA polymerase catalyzes the transcription of DNA into RNA using the four ribonucleoside triphosphates as substrates. The polypeptide is DNA-directed RNA polymerase subunit alpha (Pinus thunbergii (Japanese black pine)).